A 200-amino-acid chain; its full sequence is Charged multivesicular body protein 6 (200 aa).

Glycine 2 carries the N-myristoyl glycine lipid modification. The stretch at 10 to 94 (RSRVTEQDKA…ERMVQDIEFT (85 aa)) forms a coiled coil. Positions 168-179 (LELPDVPSEPLP) match the Type-2 MIT-interacting motif motif. The tract at residues 169 to 200 (ELPDVPSEPLPEEPPEATPVKNRPKPELVAAS) is disordered.

The protein belongs to the SNF7 family. In terms of assembly, probable core component of the endosomal sorting required for transport complex III (ESCRT-III). ESCRT-III components are thought to multimerize to form a flat lattice on the perimeter membrane of the endosome.

The protein resides in the endomembrane system. It localises to the late endosome membrane. Its function is as follows. Probable core component of the endosomal sorting required for transport complex III (ESCRT-III) which is involved in multivesicular bodies (MVBs) formation and sorting of endosomal cargo proteins into MVBs. MVBs contain intraluminal vesicles (ILVs) that are generated by invagination and scission from the limiting membrane of the endosome and mostly are delivered to lysosomes enabling degradation of membrane proteins, such as stimulated growth factor receptors, lysosomal enzymes and lipids. In the ESCRT-III complex, it probably serves as an acceptor for the ESCRT-II complex on endosomal membranes. The protein is Charged multivesicular body protein 6 (CHMP6) of Gallus gallus (Chicken).